The following is an 83-amino-acid chain: ATP synthase subunit 9, mitochondrial (83 aa).

2 helical membrane passes run 8–28 (IGAG…GNVL) and 45–72 (SFGY…LISS).

Belongs to the ATPase C chain family. In terms of assembly, F-type ATPases have 2 components, CF(1) - the catalytic core - and CF(0) - the membrane proton channel. CF(1) has five subunits: alpha(3), beta(3), gamma(1), delta(1), epsilon(1). CF(0) has three main subunits: a, b and c.

Its subcellular location is the mitochondrion membrane. Functionally, this protein is one of the chains of the nonenzymatic membrane component (F0) of mitochondrial ATPase. The polypeptide is ATP synthase subunit 9, mitochondrial (ATP9) (Helianthus annuus (Common sunflower)).